The following is a 142-amino-acid chain: Small ribosomal subunit protein uS12 (142 aa).

This sequence belongs to the universal ribosomal protein uS12 family. As to quaternary structure, part of the 30S ribosomal subunit.

Functionally, with S4 and S5 plays an important role in translational accuracy. Located at the interface of the 30S and 50S subunits. This Methanococcoides burtonii (strain DSM 6242 / NBRC 107633 / OCM 468 / ACE-M) protein is Small ribosomal subunit protein uS12.